A 641-amino-acid polypeptide reads, in one-letter code: MKINKKQIVFFILFSIFLNHVNGIFYLPGMIPHDFAQGEEGAIKVNKITSVHTQIPYKYYQLPGVCQPKEGIIDDTENLGEILLGDRIENSDYTFNFLTDGGKCKVINSESCSPIIKKEDLKVLEDRIQNQYRVHWLLDGLPVRQTGRLASDPGFDLGFMTLAEGQTVATAEKYLNNHLEITIFYHSNPTDNTSRIVGFEIFPTSRQYKKVENWKGDTGDDCPQYGENFEQLSVSVKEGEDQERFVLWTYEVKYTPSPVLWNKRWDIYFESNDNSVHWFSILNSLMIVFILTVMVAMIIIRTLKKDIRRYTSIDTSEDRDSQEETGWKMIHGDVFRPPSHPMLLSVCIGSGVQIFSMTLITMIFAVLGFLSPANIGGLATALIVLFVLSAMFAGYFSTRVFTIFKGRNWKKNTIYTALSMPGIIFGIFFFVNMFLRGAKSSAAVPFGTFASIIAMWFGISVPLVFLGSYFASKKPVPEDPVRTNQIPRQVPDQIWYMNPYLSILMGGILPFGAVFIELHFILTSLWDNQFYYIFGFLFIVLMILIVTSAEISIVMCYFQLCAEDHHWWWRSFLTAGSSSLYMFIYSVSFFRYLGITKFISSLLDFSYSFIMSLAFAALTGTIGFYSCYFLVRKIYSSIHIN.

Positions 1–23 are cleaved as a signal peptide; the sequence is MKINKKQIVFFILFSIFLNHVNG. The Extracellular segment spans residues 24–279; that stretch reads IFYLPGMIPH…ESNDNSVHWF (256 aa). A helical transmembrane segment spans residues 280-300; the sequence is SILNSLMIVFILTVMVAMIII. The Cytoplasmic portion of the chain corresponds to 301 to 349; that stretch reads RTLKKDIRRYTSIDTSEDRDSQEETGWKMIHGDVFRPPSHPMLLSVCIG. The chain crosses the membrane as a helical span at residues 350 to 370; sequence SGVQIFSMTLITMIFAVLGFL. Over 371–374 the chain is Extracellular; it reads SPAN. A helical transmembrane segment spans residues 375–395; that stretch reads IGGLATALIVLFVLSAMFAGY. At 396 to 413 the chain is on the cytoplasmic side; that stretch reads FSTRVFTIFKGRNWKKNT. A helical membrane pass occupies residues 414 to 434; the sequence is IYTALSMPGIIFGIFFFVNMF. Residues 435-445 are Extracellular-facing; sequence LRGAKSSAAVP. Residues 446–466 form a helical membrane-spanning segment; the sequence is FGTFASIIAMWFGISVPLVFL. Residues 467 to 502 lie on the Cytoplasmic side of the membrane; the sequence is GSYFASKKPVPEDPVRTNQIPRQVPDQIWYMNPYLS. Residues 503-523 form a helical membrane-spanning segment; it reads ILMGGILPFGAVFIELHFILT. Topologically, residues 524-532 are extracellular; the sequence is SLWDNQFYY. Residues 533 to 553 traverse the membrane as a helical segment; it reads IFGFLFIVLMILIVTSAEISI. Residues 554–578 are Cytoplasmic-facing; sequence VMCYFQLCAEDHHWWWRSFLTAGSS. Residues 579–599 form a helical membrane-spanning segment; that stretch reads SLYMFIYSVSFFRYLGITKFI. Residues 600–608 are Extracellular-facing; it reads SSLLDFSYS. The helical transmembrane segment at 609-629 threads the bilayer; sequence FIMSLAFAALTGTIGFYSCYF. Topologically, residues 630–641 are cytoplasmic; it reads LVRKIYSSIHIN.

The protein belongs to the nonaspanin (TM9SF) (TC 9.A.2) family.

Its subcellular location is the membrane. Involved in adhesion, phagocytosis of hydrophilic particles and intracellular killing of bacteria. Associates with proteins harboring glycine-rich transmembrane domains and ensures their efficient localization to the cell surface. The protein is Putative phagocytic receptor 1a (phg1a) of Dictyostelium discoideum (Social amoeba).